Consider the following 126-residue polypeptide: Large ribosomal subunit protein bL12 (126 aa).

This sequence belongs to the bacterial ribosomal protein bL12 family. Homodimer. Part of the ribosomal stalk of the 50S ribosomal subunit. Forms a multimeric L10(L12)X complex, where L10 forms an elongated spine to which 2 to 4 L12 dimers bind in a sequential fashion. Binds GTP-bound translation factors.

Functionally, forms part of the ribosomal stalk which helps the ribosome interact with GTP-bound translation factors. Is thus essential for accurate translation. The chain is Large ribosomal subunit protein bL12 from Bordetella avium (strain 197N).